The sequence spans 166 residues: MAPSTVAVELLSPKEKNRLRKPVVEKMRRDRINSSIEQLKLLLEQEFARHQPNSKLEKADILEMAVSYLKHSKAFVAAAGPKSLHQDYSEGYSWCLQEAVQFLTLHAASDTQMKLLYHFQRPPAAPAAPAKEPKAPGAAPPPALSAKATAAAAAAHQPACGLWRPW.

The bHLH domain maps to 16–72; the sequence is KNRLRKPVVEKMRRDRINSSIEQLKLLLEQEFARHQPNSKLEKADILEMAVSYLKHS. An Orange domain is found at 88 to 119; that stretch reads YSEGYSWCLQEAVQFLTLHAASDTQMKLLYHF. The interval 125–144 is disordered; sequence APAAPAKEPKAPGAAPPPAL. A WRPW motif motif is present at residues 163 to 166; it reads WRPW.

Transcription repression requires formation of a complex with a corepressor protein of the Groucho/TLE family. Expressed in fetal heart and brain tumors.

It localises to the nucleus. Its function is as follows. Transcriptional repressor of genes that require a bHLH protein for their transcription. Plays an important role as neurogenesis negative regulator. The sequence is that of Transcription factor HES-5 (HES5) from Homo sapiens (Human).